The sequence spans 153 residues: 3-hydroxyacyl-[acyl-carrier-protein] dehydratase FabZ (153 aa).

H56 is a catalytic residue.

It belongs to the thioester dehydratase family. FabZ subfamily.

The protein localises to the cytoplasm. It carries out the reaction a (3R)-hydroxyacyl-[ACP] = a (2E)-enoyl-[ACP] + H2O. Functionally, involved in unsaturated fatty acids biosynthesis. Catalyzes the dehydration of short chain beta-hydroxyacyl-ACPs and long chain saturated and unsaturated beta-hydroxyacyl-ACPs. The chain is 3-hydroxyacyl-[acyl-carrier-protein] dehydratase FabZ from Nitrosomonas europaea (strain ATCC 19718 / CIP 103999 / KCTC 2705 / NBRC 14298).